Here is a 306-residue protein sequence, read N- to C-terminus: Protein-L-isoaspartate O-methyltransferase 2 (306 aa).

Residues 1-82 (MSTTPPRNKF…ASAATAGGGG (82 aa)) are disordered. Over residues 38–48 (PAAPTPAPAKP) the composition is skewed to pro residues. Low complexity predominate over residues 54–77 (PRTAAPAPAPVPASAVEQRASAAT). The active site involves serine 142.

The protein belongs to the methyltransferase superfamily. L-isoaspartyl/D-aspartyl protein methyltransferase family.

It localises to the cytoplasm. The catalysed reaction is [protein]-L-isoaspartate + S-adenosyl-L-methionine = [protein]-L-isoaspartate alpha-methyl ester + S-adenosyl-L-homocysteine. Functionally, catalyzes the methyl esterification of L-isoaspartyl residues in peptides and proteins that result from spontaneous decomposition of normal L-aspartyl and L-asparaginyl residues. It plays a role in the repair and/or degradation of damaged proteins. The protein is Protein-L-isoaspartate O-methyltransferase 2 of Cupriavidus necator (strain ATCC 17699 / DSM 428 / KCTC 22496 / NCIMB 10442 / H16 / Stanier 337) (Ralstonia eutropha).